The following is a 222-amino-acid chain: MKLEFIGHGCVQLSEGDDKIIFDPFIDDNPVAKISSSDVSPNYILLTHYHDDHKGDALEIAKDNDSLLISTAEIAGAAEQKGVKAHPMHIGGTKEFDFGKVRVTPALHGSGIDGGLACGFVVDFHGKKVYHAGDTGLFSDMKLISELEEIDIAILPIGGNFTMGAEEAVMATQYLKPKAVMPVHYNTWPLIPADDEQFKKDIQEKTNSECFVLEPGDSMEMN.

Belongs to the UPF0173 family.

The protein is UPF0173 metal-dependent hydrolase Nther_2337 of Natranaerobius thermophilus (strain ATCC BAA-1301 / DSM 18059 / JW/NM-WN-LF).